Consider the following 116-residue polypeptide: Putative pterin-4-alpha-carbinolamine dehydratase 1 (116 aa).

The protein belongs to the pterin-4-alpha-carbinolamine dehydratase family.

It carries out the reaction (4aS,6R)-4a-hydroxy-L-erythro-5,6,7,8-tetrahydrobiopterin = (6R)-L-erythro-6,7-dihydrobiopterin + H2O. In Gloeobacter violaceus (strain ATCC 29082 / PCC 7421), this protein is Putative pterin-4-alpha-carbinolamine dehydratase 1.